The chain runs to 883 residues: Phosphoenolpyruvate carboxylase (883 aa).

Active-site residues include His141 and Lys547.

Belongs to the PEPCase type 1 family. Mg(2+) is required as a cofactor.

It catalyses the reaction oxaloacetate + phosphate = phosphoenolpyruvate + hydrogencarbonate. In terms of biological role, forms oxaloacetate, a four-carbon dicarboxylic acid source for the tricarboxylic acid cycle. This is Phosphoenolpyruvate carboxylase from Chromohalobacter salexigens (strain ATCC BAA-138 / DSM 3043 / CIP 106854 / NCIMB 13768 / 1H11).